The primary structure comprises 141 residues: Large ribosomal subunit protein uL11 (141 aa).

This sequence belongs to the universal ribosomal protein uL11 family. In terms of assembly, part of the ribosomal stalk of the 50S ribosomal subunit. Interacts with L10 and the large rRNA to form the base of the stalk. L10 forms an elongated spine to which L12 dimers bind in a sequential fashion forming a multimeric L10(L12)X complex. Post-translationally, one or more lysine residues are methylated.

Forms part of the ribosomal stalk which helps the ribosome interact with GTP-bound translation factors. The sequence is that of Large ribosomal subunit protein uL11 from Geobacillus kaustophilus (strain HTA426).